The following is a 396-amino-acid chain: Calreticulin (396 aa).

The N-terminal stretch at 1–15 is a signal peptide; it reads MKSLCLLAIVAVVSA. An intrachain disulfide couples Cys101 to Cys133. Tyr105, Lys107, Tyr124, and Asp131 together coordinate an alpha-D-glucoside. A run of 7 repeats spans residues 186 to 197, 205 to 216, 222 to 233, 239 to 250, 254 to 264, 268 to 278, and 282 to 292. The segment at 186–250 is 4 X approximate repeats; sequence AQTGSLEEDW…DAKKPEDWDD (65 aa). The tract at residues 193–301 is P-domain; that stretch reads EDWDLLPAKK…PEYTPDDELY (109 aa). Residues 202-212 show a composition bias toward basic and acidic residues; the sequence is KIKDPDAKKPE. A disordered region spans residues 202-250; the sequence is KIKDPDAKKPEDWDEREYIDDAEDVKPEDWEKPEHIPDPDAKKPEDWDD. Positions 213-224 are enriched in acidic residues; sequence DWDEREYIDDAE. The segment covering 225-246 has biased composition (basic and acidic residues); that stretch reads DVKPEDWEKPEHIPDPDAKKPE. Positions 254–292 are 3 X approximate repeats; it reads GEWEPPMIDNPEYKGEWKPKQIKNPAYKGKWIHPEIENP. The interval 302-396 is C-domain; that stretch reads LYENWGAIGF…KEEEEGHDEL (95 aa). Asp312 serves as a coordination point for an alpha-D-glucoside. Basic and acidic residues predominate over residues 342–380; sequence FDKLKTVEKEKKEKADEEARKVEEEARKKAEEEKEAKKD. The segment at 342 to 396 is disordered; it reads FDKLKTVEKEKKEKADEEARKVEEEARKKAEEEKEAKKDDDEEEEKEEEEGHDEL. Over residues 381–396 the composition is skewed to acidic residues; sequence DDEEEEKEEEEGHDEL. Positions 393-396 match the Prevents secretion from ER motif; it reads HDEL.

This sequence belongs to the calreticulin family.

Its subcellular location is the endoplasmic reticulum lumen. Functionally, molecular calcium-binding chaperone promoting folding, oligomeric assembly and quality control in the ER via the calreticulin/calnexin cycle. This lectin may interact transiently with almost all of the monoglucosylated glycoproteins that are synthesized in the ER. Probably by controlling the folding of extracellular matrix protein unc-52/Perlecan, may play a role in the formation of fibrous organelles, a hemidesmosome-like structure attaching muscles to the epidermis. Protects dopaminergic neurons against oxidative stress-induced neurodegeneration. The polypeptide is Calreticulin (crt-1) (Caenorhabditis briggsae).